The following is a 91-amino-acid chain: Probable Fe(2+)-trafficking protein (91 aa).

The protein belongs to the Fe(2+)-trafficking protein family. Monomer.

Could be a mediator in iron transactions between iron acquisition and iron-requiring processes, such as synthesis and/or repair of Fe-S clusters in biosynthetic enzymes. In Klebsiella pneumoniae subsp. pneumoniae (strain ATCC 700721 / MGH 78578), this protein is Probable Fe(2+)-trafficking protein.